The following is a 381-amino-acid chain: RxLR effector protein 54 (381 aa).

Positions 1–19 (MRFQSIMMLTITCAGTCLA) are cleaved as a signal peptide. Residues 57-75 (RFLRFDTVARDTAGNDEER) carry the RxLR-dEER motif. WY-domain stretches follow at residues 97–150 (SAEE…ANNG), 151–198 (NQAF…SLSG), 199–247 (NWIR…WNKN), 251–299 (FFGD…LLTS), and 302–354 (SHKT…RDKI). Positions 372-381 (KPLDFDWEIV) match the ATG8 interacting motif motif.

This sequence belongs to the RxLR effector family. Interacts via its C-terminal AIM with host ATG8CL.

The protein resides in the secreted. The protein localises to the host nucleus. It is found in the host cytoplasm. Its function is as follows. Effector that specifically binds host autophagy protein ATG8CL of the ATG8 family to stimulate autophagosome formation and subsequent autophagy rather than blocking autophagic flux. The pathogen remodels host-microbe interface by co-opting the host autophagy machinery which plays a key role in plant immunity. PexRD54 competes with the autophagy cargo receptor Joka2 to deplete it out of ATG8CL complexes and interferes with Joka2's positive effect on pathogen defense. This is RxLR effector protein 54 from Phytophthora infestans (strain T30-4) (Potato late blight agent).